The primary structure comprises 381 residues: L-lactate dehydrogenase (381 aa).

One can recognise an FMN hydroxy acid dehydrogenase domain in the interval 1 to 380 (MIISASTDYR…TRDSLVRELG (380 aa)). Substrate is bound at residue Tyr-24. FMN-binding residues include Ser-106 and Gln-127. Tyr-129 provides a ligand contact to substrate. Position 155 (Thr-155) interacts with FMN. Arg-164 is a substrate binding site. An FMN-binding site is contributed by Lys-251. His-275 functions as the Proton acceptor in the catalytic mechanism. Arg-278 is a binding site for substrate. 306–330 (DSGIRSGLDVVRMIALGADTVLIGR) provides a ligand contact to FMN.

It belongs to the FMN-dependent alpha-hydroxy acid dehydrogenase family. As to quaternary structure, homotetramer. The cofactor is FMN.

Its subcellular location is the cell inner membrane. The enzyme catalyses (S)-lactate + A = pyruvate + AH2. In terms of biological role, catalyzes the conversion of L-lactate to pyruvate. Is coupled to the respiratory chain. In Pseudomonas putida (strain GB-1), this protein is L-lactate dehydrogenase.